The primary structure comprises 197 residues: MKKIGLFGGTFDPIHNGHLHIARAFADEIGLDAVVFLPAGGPYHKDAASASAADRLAMVELATAEDARFAVSDCDIVREGATYTFDTVQIFRQQFPSAQLWWLMGSDSLMKLHTWKKWQMLVRETNIAVAMRQGDSLHQTPRELHAWLGNALQDGSIRILSAPMHNASSTEIRRAGVSDGIPPAAARYIREHGLYEK.

Belongs to the NadD family.

The enzyme catalyses nicotinate beta-D-ribonucleotide + ATP + H(+) = deamido-NAD(+) + diphosphate. It functions in the pathway cofactor biosynthesis; NAD(+) biosynthesis; deamido-NAD(+) from nicotinate D-ribonucleotide: step 1/1. Functionally, catalyzes the reversible adenylation of nicotinate mononucleotide (NaMN) to nicotinic acid adenine dinucleotide (NaAD). This chain is Probable nicotinate-nucleotide adenylyltransferase, found in Neisseria meningitidis serogroup C (strain 053442).